The primary structure comprises 147 residues: Ubiquitin-conjugating enzyme E2 D3 (147 aa).

The 147-residue stretch at 1–147 (MALKRINKEL…SREWTQKYAM (147 aa)) folds into the UBC core domain. Residues Cys-21 and Cys-107 are joined by a disulfide bond. Catalysis depends on Cys-85, which acts as the Glycyl thioester intermediate.

The protein belongs to the ubiquitin-conjugating enzyme family. In terms of assembly, interacts with SCF (SKP1-CUL1-F-box protein) E3 ubiquitin ligase complex; when Cullin is neddylated, the interaction between the E2 and the SCF complex is strengthened. Interacts with DAPK3. Interacts with BRCA1; the DNA damage checkpoint promotes the association with BRCA1 after ionizing radiation. Interacts non-covalently with ubiquitin. Interacts with E3 ubiquitin-protein ligase CBLC. Interacts with UBTD1. Interacts with RIGI and RNF135; involved in RIGI ubiquitination and activation. Phosphorylated by AURKB.

The protein localises to the cell membrane. The protein resides in the endosome membrane. The catalysed reaction is S-ubiquitinyl-[E1 ubiquitin-activating enzyme]-L-cysteine + [E2 ubiquitin-conjugating enzyme]-L-cysteine = [E1 ubiquitin-activating enzyme]-L-cysteine + S-ubiquitinyl-[E2 ubiquitin-conjugating enzyme]-L-cysteine.. It catalyses the reaction S-ubiquitinyl-[E1 ubiquitin-activating enzyme]-L-cysteine + [acceptor protein]-L-lysine = [E1 ubiquitin-activating enzyme]-L-cysteine + N(6)-monoubiquitinyl-[acceptor protein]-L-lysine.. Its pathway is protein modification; protein ubiquitination. Functionally, accepts ubiquitin from the E1 complex and catalyzes its covalent attachment to other proteins. In vitro catalyzes 'Lys-11'-, as well as 'Lys-48'-linked polyubiquitination. Cooperates with the E2 CDC34 and the SCF(FBXW11) E3 ligase complex for the polyubiquitination of NFKBIA leading to its subsequent proteasomal degradation. Acts as an initiator E2, priming the phosphorylated NFKBIA target at positions 'Lys-21' and/or 'Lys-22' with a monoubiquitin. Ubiquitin chain elongation is then performed by CDC34, building ubiquitin chains from the UBE2D3-primed NFKBIA-linked ubiquitin. Also acts as an initiator E2, in conjunction with RNF8, for the priming of PCNA. Monoubiquitination of PCNA, and its subsequent polyubiquitination, are essential events in the operation of the DNA damage tolerance (DDT) pathway that is activated after DNA damage caused by UV or chemical agents during S-phase. Associates with the BRCA1/BARD1 E3 ligase complex to perform ubiquitination at DNA damage sites following ionizing radiation leading to DNA repair. Targets DAPK3 for ubiquitination which influences promyelocytic leukemia protein nuclear body (PML-NB) formation in the nucleus. In conjunction with the MDM2 and TOPORS E3 ligases, functions ubiquitination of p53/TP53. In conjunction with the CBL E3 ligase, targets EGFR for polyubiquitination at the plasma membrane as well as during its internalization and transport on endosomes. In conjunction with the STUB1 E3 quality control E3 ligase, ubiquitinates unfolded proteins to catalyze their immediate destruction. Together with RNF135, catalyzes the viral RNA-dependent 'Lys-63'-linked polyubiquitination of RIGI to activate the downstream signaling pathway that leads to interferon beta production. Together with ZNF598, catalyzes ubiquitination of 40S ribosomal proteins in response to ribosome collisions. In cooperation with the GATOR2 complex, catalyzes 'Lys-6'-linked ubiquitination of NPRL2. This Homo sapiens (Human) protein is Ubiquitin-conjugating enzyme E2 D3 (UBE2D3).